Reading from the N-terminus, the 503-residue chain is Aspartyl/glutamyl-tRNA(Asn/Gln) amidotransferase subunit B (503 aa).

It belongs to the GatB/GatE family. GatB subfamily. Heterotrimer of A, B and C subunits.

It carries out the reaction L-glutamyl-tRNA(Gln) + L-glutamine + ATP + H2O = L-glutaminyl-tRNA(Gln) + L-glutamate + ADP + phosphate + H(+). The catalysed reaction is L-aspartyl-tRNA(Asn) + L-glutamine + ATP + H2O = L-asparaginyl-tRNA(Asn) + L-glutamate + ADP + phosphate + 2 H(+). Its function is as follows. Allows the formation of correctly charged Asn-tRNA(Asn) or Gln-tRNA(Gln) through the transamidation of misacylated Asp-tRNA(Asn) or Glu-tRNA(Gln) in organisms which lack either or both of asparaginyl-tRNA or glutaminyl-tRNA synthetases. The reaction takes place in the presence of glutamine and ATP through an activated phospho-Asp-tRNA(Asn) or phospho-Glu-tRNA(Gln). This is Aspartyl/glutamyl-tRNA(Asn/Gln) amidotransferase subunit B from Cereibacter sphaeroides (strain KD131 / KCTC 12085) (Rhodobacter sphaeroides).